The sequence spans 345 residues: tRNA-dihydrouridine(20/20a) synthase (345 aa).

Residues 26–28 (PML) and Gln-78 contribute to the FMN site. Cys-108 functions as the Proton donor in the catalytic mechanism. FMN contacts are provided by residues Lys-147, His-180, 220-222 (NGG), and 242-243 (GR).

This sequence belongs to the Dus family. DusA subfamily. FMN is required as a cofactor.

The catalysed reaction is 5,6-dihydrouridine(20) in tRNA + NADP(+) = uridine(20) in tRNA + NADPH + H(+). It catalyses the reaction 5,6-dihydrouridine(20) in tRNA + NAD(+) = uridine(20) in tRNA + NADH + H(+). It carries out the reaction 5,6-dihydrouridine(20a) in tRNA + NADP(+) = uridine(20a) in tRNA + NADPH + H(+). The enzyme catalyses 5,6-dihydrouridine(20a) in tRNA + NAD(+) = uridine(20a) in tRNA + NADH + H(+). Functionally, catalyzes the synthesis of 5,6-dihydrouridine (D), a modified base found in the D-loop of most tRNAs, via the reduction of the C5-C6 double bond in target uridines. Specifically modifies U20 and U20a in tRNAs. In Yersinia pestis, this protein is tRNA-dihydrouridine(20/20a) synthase.